We begin with the raw amino-acid sequence, 292 residues long: MKRIALFLLTNVAVVVVLGIVASLLGVNRYLTANGLNLGALLGFAFIMGFGGAIISLLMSKPIAKMSMGVTIINAPRNGDEAWIVETVRAFSEKAGIQMPEVGIYEGEPNAFATGAFKNSALVAVSTGLLQGMTREEVEAVIGHEVAHVANGDMVTMALIQGVMNTFVVFLSRVIGYAVDSFLRRNDENSSGPGIGYMITTIVLDIVLGFLAAIIVAWFSRQREFRADAGAAQLMGRKQPMINALHRLGGMRPGAMPQSLQAMGITGNIGKLFSSHPPIEERVAALQNSQSA.

The next 2 helical transmembrane spans lie at 4 to 24 (IALFLLTNVAVVVVLGIVASL) and 38 to 58 (LGALLGFAFIMGFGGAIISLL). Zn(2+) is bound at residue His144. The active site involves Glu145. A Zn(2+)-binding site is contributed by His148. A run of 2 helical transmembrane segments spans residues 152–172 (GDMVTMALIQGVMNTFVVFLS) and 199–219 (ITTIVLDIVLGFLAAIIVAWF). Glu224 contacts Zn(2+).

Belongs to the peptidase M48B family. Requires Zn(2+) as cofactor.

Its subcellular location is the cell inner membrane. The protein is Protease HtpX homolog of Acidovorax ebreus (strain TPSY) (Diaphorobacter sp. (strain TPSY)).